The following is an 844-amino-acid chain: Probable serine/threonine-protein kinase DDB_G0267566 (844 aa).

ANK repeat units follow at residues 335–367 (KGDT…NANI) and 371–400 (KHKV…KPFL). The Protein kinase domain maps to 508–773 (SELGKLIGKG…FEVFQKLKKV (266 aa)). ATP is bound by residues 514 to 522 (IGKGANGKV) and Lys-539. Asp-634 functions as the Proton acceptor in the catalytic mechanism.

This sequence belongs to the protein kinase superfamily. Ser/Thr protein kinase family.

The catalysed reaction is L-seryl-[protein] + ATP = O-phospho-L-seryl-[protein] + ADP + H(+). The enzyme catalyses L-threonyl-[protein] + ATP = O-phospho-L-threonyl-[protein] + ADP + H(+). The polypeptide is Probable serine/threonine-protein kinase DDB_G0267566 (Dictyostelium discoideum (Social amoeba)).